Reading from the N-terminus, the 321-residue chain is Large ribosomal RNA subunit accumulation protein YCED homolog 1, chloroplastic (321 aa).

Residues 1-32 (MSLVCSLSCVAPLPQTKQSRPSFLKLETCTLS) constitute a chloroplast transit peptide.

This sequence belongs to the DUF177 domain family.

It is found in the plastid. It localises to the chloroplast stroma. The protein localises to the chloroplast nucleoid. In terms of biological role, plays a role in synthesis, processing and/or stability of 23S rRNA. Required for embryogenesis. In Arabidopsis thaliana (Mouse-ear cress), this protein is Large ribosomal RNA subunit accumulation protein YCED homolog 1, chloroplastic.